The primary structure comprises 346 residues: Phenylalanine--tRNA ligase alpha subunit (346 aa).

Glu-261 is a Mg(2+) binding site.

This sequence belongs to the class-II aminoacyl-tRNA synthetase family. Phe-tRNA synthetase alpha subunit type 1 subfamily. In terms of assembly, tetramer of two alpha and two beta subunits. The cofactor is Mg(2+).

Its subcellular location is the cytoplasm. The enzyme catalyses tRNA(Phe) + L-phenylalanine + ATP = L-phenylalanyl-tRNA(Phe) + AMP + diphosphate + H(+). The protein is Phenylalanine--tRNA ligase alpha subunit of Dehalococcoides mccartyi (strain ATCC BAA-2100 / JCM 16839 / KCTC 5957 / BAV1).